A 173-amino-acid polypeptide reads, in one-letter code: Adenine phosphoribosyltransferase (173 aa).

It belongs to the purine/pyrimidine phosphoribosyltransferase family. As to quaternary structure, homodimer.

The protein resides in the cytoplasm. It carries out the reaction AMP + diphosphate = 5-phospho-alpha-D-ribose 1-diphosphate + adenine. Its pathway is purine metabolism; AMP biosynthesis via salvage pathway; AMP from adenine: step 1/1. In terms of biological role, catalyzes a salvage reaction resulting in the formation of AMP, that is energically less costly than de novo synthesis. This Caldanaerobacter subterraneus subsp. tengcongensis (strain DSM 15242 / JCM 11007 / NBRC 100824 / MB4) (Thermoanaerobacter tengcongensis) protein is Adenine phosphoribosyltransferase.